The following is a 311-amino-acid chain: Malate dehydrogenase (311 aa).

Residues 7–13 (GAAGGIG) and Asp34 contribute to the NAD(+) site. Positions 81 and 87 each coordinate substrate. NAD(+) contacts are provided by residues Asn94 and 117 to 119 (ITN). 2 residues coordinate substrate: Asn119 and Arg153. Residue His177 is the Proton acceptor of the active site. An NAD(+)-binding site is contributed by Met227.

The protein belongs to the LDH/MDH superfamily. MDH type 1 family. In terms of assembly, homodimer.

The enzyme catalyses (S)-malate + NAD(+) = oxaloacetate + NADH + H(+). Its function is as follows. Catalyzes the reversible oxidation of malate to oxaloacetate. In Shewanella piezotolerans (strain WP3 / JCM 13877), this protein is Malate dehydrogenase.